The chain runs to 620 residues: Chaperone protein DnaK (620 aa).

Thr-197 is modified (phosphothreonine; by autocatalysis). Residues 597-620 (AMANKNNAEQPKKKDDDVIDAEVE) are disordered.

The protein belongs to the heat shock protein 70 family.

Its function is as follows. Acts as a chaperone. This is Chaperone protein DnaK from Helicobacter pylori (strain G27).